We begin with the raw amino-acid sequence, 180 residues long: Oligoribonuclease (180 aa).

Residues 7–168 (LVWIDLEMTG…QDIRDSIDEL (162 aa)) form the Exonuclease domain. Tyr-128 is an active-site residue.

The protein belongs to the oligoribonuclease family.

The protein localises to the cytoplasm. Functionally, 3'-to-5' exoribonuclease specific for small oligoribonucleotides. This Dichelobacter nodosus (strain VCS1703A) protein is Oligoribonuclease.